A 319-amino-acid polypeptide reads, in one-letter code: Translocon-associated protein subunit alpha (319 aa).

Positions 1-21 are cleaved as a signal peptide; the sequence is MRLLPRLLLLFLLAFPAAVLL. The Lumenal segment spans residues 22–208; the sequence is RGGPGGSLAV…EREDGLDGET (187 aa). Acidic residues predominate over residues 35–76; it reads LTEDEETVEDPIIEDEDDEAEVEEDEPTDLAEEKEEEEDVSS. Positions 35-84 are disordered; sequence LTEDEETVEDPIIEDEDDEAEVEEDEPTDLAEEKEEEEDVSSEPEASPSA. Residues Asn-137 and Asn-192 are each glycosylated (N-linked (GlcNAc...) asparagine). Residues 209–229 form a helical membrane-spanning segment; sequence IFMYMFLAGLGLLVVVGLHQL. Over 230 to 319 the chain is Cytoplasmic; that stretch reads LESRKRKRPI…SLRQLAVCGI (90 aa). Phosphoserine is present on Ser-248. Thr-261 is modified (phosphothreonine).

The protein belongs to the TRAP-alpha family. Heterotetramer of TRAP-alpha, TRAP-beta, TRAP-delta and TRAP-gamma. Interacts with palmitoylated calnexin (CALX), the interaction is required for efficient folding of glycosylated proteins.

The protein resides in the endoplasmic reticulum membrane. Functionally, TRAP proteins are part of a complex whose function is to bind calcium to the ER membrane and thereby regulate the retention of ER resident proteins. May be involved in the recycling of the translocation apparatus after completion of the translocation process or may function as a membrane-bound chaperone facilitating folding of translocated proteins. In Rattus norvegicus (Rat), this protein is Translocon-associated protein subunit alpha (Ssr1).